Consider the following 534-residue polypeptide: Importin subunit alpha-1b (534 aa).

The IBB domain occupies 1–58 (MSLRPSERAEVRRSRYKVAVDADEGRRRREDNMVEIRKSRREESLLKKRRDGLPAAAA). ARM repeat units follow at residues 111–151 (SPPI…NIAS), 154–193 (SDNT…NVAG), 196–236 (PKCR…NFCR), 238–277 (KPQP…YLSD), 280–319 (NDKI…NIVT), 322–362 (DMQT…NITA), 365–404 (REQI…NATS), and 408–447 (HDQI…NILK). A disordered region spans residues 505 to 534 (DAMPSGDNAQNGFNFGNQQPNVPSGGFNFG). Residues 514-523 (QNGFNFGNQQ) show a composition bias toward low complexity.

The protein belongs to the importin alpha family. As to quaternary structure, forms a complex with importin subunit beta-1. The whole complex, most stable and composed of importin alpha and importin beta, is referred to as PTAC or pore targeting complex. Highly expressed in root and weakly in callus, etiolated leaf and green leaf.

The protein localises to the cytoplasm. It localises to the perinuclear region. Functions in nuclear protein import. Binds specifically and directly to substrates containing either a simple or bipartite NLS motif. Promotes docking of import substrates to the nuclear envelope. In conjunction with importin beta-1, mediates the nuclear envelope docking, and the subsequent translocation into the nucleus of the constitutive morphogenetic 1 (COP1) protein containing bipartite NLS motif. The chain is Importin subunit alpha-1b from Oryza sativa subsp. japonica (Rice).